The chain runs to 38 residues: Cytochrome b6-f complex subunit 5 (38 aa).

A helical membrane pass occupies residues 5–25; that stretch reads LLCGIVLGLIPVTLLGLFVAA.

Belongs to the PetG family. In terms of assembly, the 4 large subunits of the cytochrome b6-f complex are cytochrome b6, subunit IV (17 kDa polypeptide, PetD), cytochrome f and the Rieske protein, while the 4 small subunits are PetG, PetL, PetM and PetN. The complex functions as a dimer.

The protein localises to the cellular thylakoid membrane. In terms of biological role, component of the cytochrome b6-f complex, which mediates electron transfer between photosystem II (PSII) and photosystem I (PSI), cyclic electron flow around PSI, and state transitions. PetG is required for either the stability or assembly of the cytochrome b6-f complex. The polypeptide is Cytochrome b6-f complex subunit 5 (Parasynechococcus marenigrum (strain WH8102)).